The primary structure comprises 182 residues: Ribosome-recycling factor (182 aa).

Positions 137–158 are disordered; the sequence is KKSEKESEISEDQSRDEQDNVQ.

Belongs to the RRF family.

The protein resides in the cytoplasm. Responsible for the release of ribosomes from messenger RNA at the termination of protein biosynthesis. May increase the efficiency of translation by recycling ribosomes from one round of translation to another. The chain is Ribosome-recycling factor from Prochlorococcus marinus (strain MIT 9211).